The following is a 338-amino-acid chain: Fusarubin cluster-specific transcription factor fsr6 (338 aa).

The segment at residues 16–44 (CDACTTAKVRCSRTHPCERCEDNGQAKEC) is a DNA-binding region (zn(2)-C6 fungal-type).

The protein localises to the nucleus. Transcription factor that regulates the expression of the gene cluster that mediates the biosynthesis of fusarubins, highly pigmented naphthoquinones responsible for the coloration of the fruiting bodies. This is Fusarubin cluster-specific transcription factor fsr6 from Gibberella fujikuroi (strain CBS 195.34 / IMI 58289 / NRRL A-6831) (Bakanae and foot rot disease fungus).